A 942-amino-acid chain; its full sequence is Apolipoprotein B receptor (942 aa).

Disordered regions lie at residues 66 to 212 (GLRS…VTED), 240 to 269 (ERMV…QAML), 283 to 487 (DSLG…SPER), 501 to 607 (AGPE…VPWE), and 671 to 942 (EGRG…PKPQ). 5 stretches are compositionally biased toward basic and acidic residues: residues 106–123 (QAER…DARG), 132–143 (PEAEPGTHRDRS), 240–252 (ERMV…ERAR), 312–330 (EADK…EAEV), and 338–352 (EAER…HIAE). The segment covering 353–370 (EEAMGEQETEGSFEDEER) has biased composition (acidic residues). Ser-364 bears the Phosphoserine mark. A compositionally biased stretch (basic and acidic residues) spans 384–397 (EEVRAEESSREKRN). A compositionally biased stretch (acidic residues) spans 415-425 (PDWEDSPEVST). Basic and acidic residues-rich tracts occupy residues 444 to 458 (LRVK…ELVR) and 466 to 475 (QLEEGQKGQE). 2 positions are modified to phosphoserine: Ser-484 and Ser-520. Basic and acidic residues-rich tracts occupy residues 514–531 (GVDR…EAGK) and 672–687 (GRGE…ETTE). Positions 709 to 721 (QEIDGTEEGEQAE) are enriched in acidic residues. The segment covering 837-853 (SRLDVSVPRSRVLLSRS) has biased composition (low complexity). Basic residues predominate over residues 854-863 (SSRRRSRPSF).

Homodimer. There are 2 forms in macrophages, the membrane-binding proteins 200 kDa (MBP 200) and 235 kDa (MBP 235), that can be reduced into a single active ligand-binding species with intermediate mobility (MBP 200R). As to expression, highly expressed in spleen, lung and skeletal muscle, and weakly in brain, heart, kidney, and testis.

It localises to the cell membrane. In terms of biological role, macrophage receptor that binds to the apolipoprotein B48 (APOB) of dietary triglyceride (TG)-rich lipoproteins (TRL) or to a like domain of APOB in hypertriglyceridemic very low density lipoprotein (HTG-VLDL). Binds and internalizes TRL when out of the context of the macrophage. May provide essential lipids to reticuloendothelial cells. Could also be involved in foam cell formation with elevated TRL and remnant lipoprotein (RLP). Mediates the rapid high-affinity uptake of chylomicrons (CM), HTG-VLDL, and trypsinized (tryp) VLDL devoid of APOE in vitro in macrophages. The protein is Apolipoprotein B receptor of Mus musculus (Mouse).